A 310-amino-acid chain; its full sequence is Isoflavone reductase homolog P3 (310 aa).

NADP(+) contacts are provided by residues 12–18, Arg37, and Lys46; that span reads GGTGYIG. Lys134 functions as the Proton acceptor in the catalytic mechanism. Arg138 serves as a coordination point for NADP(+).

It belongs to the NmrA-type oxidoreductase family. Isoflavone reductase subfamily.

Its subcellular location is the cytoplasm. This is Isoflavone reductase homolog P3 from Arabidopsis thaliana (Mouse-ear cress).